We begin with the raw amino-acid sequence, 199 residues long: FMN-dependent NADH:quinone oxidoreductase (199 aa).

Residues Ser10, Ser16 to Ser18, and Met96 to Phe99 contribute to the FMN site.

It belongs to the azoreductase type 1 family. Homodimer. The cofactor is FMN.

It catalyses the reaction 2 a quinone + NADH + H(+) = 2 a 1,4-benzosemiquinone + NAD(+). The catalysed reaction is N,N-dimethyl-1,4-phenylenediamine + anthranilate + 2 NAD(+) = 2-(4-dimethylaminophenyl)diazenylbenzoate + 2 NADH + 2 H(+). In terms of biological role, quinone reductase that provides resistance to thiol-specific stress caused by electrophilic quinones. Functionally, also exhibits azoreductase activity. Catalyzes the reductive cleavage of the azo bond in aromatic azo compounds to the corresponding amines. This is FMN-dependent NADH:quinone oxidoreductase from Azotobacter vinelandii (strain DJ / ATCC BAA-1303).